The following is a 208-amino-acid chain: Ribosomal RNA small subunit methyltransferase G (208 aa).

S-adenosyl-L-methionine-binding positions include G75, L80, 126–127 (VE), and R141.

Belongs to the methyltransferase superfamily. RNA methyltransferase RsmG family.

The protein resides in the cytoplasm. It carries out the reaction guanosine(527) in 16S rRNA + S-adenosyl-L-methionine = N(7)-methylguanosine(527) in 16S rRNA + S-adenosyl-L-homocysteine. Functionally, specifically methylates the N7 position of guanine in position 527 of 16S rRNA. This is Ribosomal RNA small subunit methyltransferase G from Marinomonas sp. (strain MWYL1).